We begin with the raw amino-acid sequence, 94 residues long: MVRIRLTRMGKKKQPFYRIVVVDQRKRRDGAYIESLGYYDPIKDPYILNVDVDKAVEWIMKGAQPSDTVRNLLRKAGVFKKVDELKRTKKEENK.

The protein belongs to the bacterial ribosomal protein bS16 family.

The chain is Small ribosomal subunit protein bS16 from Thermosipho africanus (strain TCF52B).